The sequence spans 293 residues: Protease HtpX (293 aa).

2 helical membrane-spanning segments follow: residues 2–22 (FRILLFLATNIAVVLVASVTL) and 38–58 (LTSLLIFCAVFGMSGAMISLF). Position 145 (histidine 145) interacts with Zn(2+). Glutamate 146 is a catalytic residue. Position 149 (histidine 149) interacts with Zn(2+). A run of 2 helical transmembrane segments spans residues 156-176 (VTLALIQGVINTFVMFFARII) and 193-213 (IGFFITTIFAEIVLGILASII). Position 222 (glutamate 222) interacts with Zn(2+).

The protein belongs to the peptidase M48B family. Zn(2+) is required as a cofactor.

It is found in the cell inner membrane. The polypeptide is Protease HtpX (Hahella chejuensis (strain KCTC 2396)).